A 7126-amino-acid chain; its full sequence is Replicase polyprotein 1ab (7126 aa).

The CoV Nsp1 globular domain maps to 25–151 (RSDHVACTVP…EHTFLLRKNG (127 aa)). Residues 167-195 (TPYVEILDDLEADPTGKYSQNLLKKLIGG) enclose the BetaCoV Nsp1 C-terminal domain. Positions 197–472 (CIPVDQYMCG…WDKVVETANL (276 aa)) constitute a CoV Nsp2 N-terminal domain. Positions 339, 342, 358, and 360 each coordinate Zn(2+). The tract at residues 339–360 (CNACGRGTWCTGNAIQGFACDC) is C4. Residues 478–712 (QHSLNFCQQF…LDIMSKAMKL (235 aa)) enclose the CoV Nsp2 middle domain. The region spanning 714-847 (HTNVSWAGTK…VSTLFRLKGG (134 aa)) is the CoV Nsp2 C-terminal domain. The region spanning 851–960 (KKVTFGDVNT…MTFSINPVED (110 aa)) is the Ubiquitin-like 1 domain. The segment at 1039–1061 (AQEPSVESTDSTPSTSTVVSEND) is disordered. Over residues 1041–1059 (EPSVESTDSTPSTSTVVSE) the composition is skewed to low complexity. Macro domains follow at residues 1159–1328 (DLSK…KPDG) and 1329–1453 (LVYS…AIQT). One can recognise a DPUP domain in the interval 1453-1526 (TPETAFINNV…LEACRAYLTS (74 aa)). A Ubiquitin-like 2 domain is found at 1531 to 1586 (QVNIEVLVTIDGVNFRTVILNDATTFRKQLGATFYKGVDISDALPTVKMGGESLFV). Residues 1600-1871 (EYYGTSDVTF…KVEVNPDLSN (272 aa)) enclose the Peptidase C16 domain. Cys1641 functions as the For PL-PRO activity in the catalytic mechanism. Zn(2+)-binding residues include Cys1721, Cys1724, Cys1756, and Cys1758. Residues 1721–1758 (CTVCGIRDIEYTGMRACVYAGVNSMEELQSVFNETCVC) form a C4-type zinc finger. Active-site for PL-PRO activity residues include His1807 and Asp1822. Positions 1885–2002 (TIKYSPATIL…QLYDVAPIVL (118 aa)) constitute a Nucleic acid-binding domain. The region spanning 2019–2140 (PNVPVVEDVS…AKITVTATTA (122 aa)) is the G2M domain. Transmembrane regions (helical) follow at residues 2119-2139 (VLLG…TATT), 2152-2172 (FVVN…LFFL), and 2229-2249 (LFLL…LVIF). Residues 2119 to 2402 (VLLGASSLFA…VTHIPLHGLV (284 aa)) form an HD1 region. A 3Ecto domain is found at 2266–2332 (LAMYKEVRSY…LQMLQTHITS (67 aa)). Cystine bridges form between Cys2282–Cys2310 and Cys2300–Cys2307. 3 helical membrane-spanning segments follow: residues 2333–2353 (YVLN…YVLY), 2357–2377 (FNVL…SAFV), and 2382–2402 (YNYI…HGLV). The tract at residues 2416-2506 (KFYSHVINGC…TLRRLIKPTD (91 aa)) is Y1. Residues 2416–2789 (KFYSHVINGC…LSVKFSATKI (374 aa)) enclose the CoV Nsp3 Y domain. Residues His2420, Cys2425, Cys2430, Cys2433, Cys2466, His2469, Cys2473, and Cys2476 each coordinate Zn(2+). Positions 2420-2433 (HVINGCKDTACLLC) are ZF1. A ZF2 region spans residues 2466 to 2476 (CCKHNWNCVEC). The interval 2507–2605 (QSHYYVDSVV…LVDVNLVTTV (99 aa)) is Y2. The coV-Y stretch occupies residues 2507–2789 (QSHYYVDSVV…LSVKFSATKI (283 aa)). Residues 2606–2688 (GDSREIAIKM…DALQYAHKND (83 aa)) are Y3. Residues 2689–2789 (IQLTTECYNN…LSVKFSATKI (101 aa)) form a Y4 region. Transmembrane regions (helical) follow at residues 2807 to 2827 (GYCI…FCLP), 3079 to 3099 (STSL…FYYI), 3112 to 3132 (CAVV…FIVA), and 3156 to 3176 (AFIM…IWML). Positions 2807–3176 (GYCILTLFVF…FGTVVPIWML (370 aa)) are HD2. Positions 3202–3298 (VFTDGKLNCS…NCSVTSSVLQ (97 aa)) constitute a Nsp4C domain. The Peptidase C30 domain occupies 3299-3604 (SGLVKMSAPS…NMQVMGVVMQ (306 aa)). Active-site for 3CL-PRO activity residues include His3339 and Cys3446. 7 helical membrane passes run 3610–3630 (ISYG…VSVM), 3644–3664 (TIPT…MFTV), 3669–3689 (TFLS…NIVY), 3714–3734 (RTTH…AIIV), 3742–3762 (MSNL…YVIG), 3791–3811 (LAKF…FILP), and 3815–3835 (LVLL…GVFS). The interval 3610 to 3835 (ISYGFMHWLM…MCTMYFGVFS (226 aa)) is HD3. Residues 3897 to 3979 (SKLTDLKCTS…DLFENSSVLQ (83 aa)) form the RdRp Nsp7 cofactor domain. Residues 3980–4178 (ATLTEFSHLA…RASSSAVKLQ (199 aa)) form the RdRp Nsp8 cofactor domain. In terms of domain architecture, Nsp9 ssRNA-binding spans 4179 to 4288 (NNEIHPKGLK…GHIAATVRLQ (110 aa)). The 139-residue stretch at 4289–4427 (AGANTEFASN…DALRNNTVPQ (139 aa)) folds into the ExoN/MTase coactivator domain. 8 residues coordinate Zn(2+): Cys4362, Cys4365, His4371, Cys4378, Cys4404, Cys4407, Cys4415, and Cys4417. Zinc fingers lie at residues 4362–4378 (CLYC…SGVC) and 4404–4417 (CNVC…GCNC). The NiRAN domain occupies 4433 to 4690 (FLNRVRGSSV…AAETHKDCDF (258 aa)). Positions 4638 and 4647 each coordinate Mn(2+). Residues 4695 to 4793 (IEWLLLEYDY…MNMDVNIHRH (99 aa)) enclose the Nsp12 Interface domain. Zn(2+)-binding residues include His4724, Cys4730, Cys4735, Cys4739, and Cys4916. The region spanning 4794 to 5361 (RLALKELMMY…DLYSSPTTLQ (568 aa)) is the Nsp12 RNA-dependent RNA polymerase domain. The interval 4796-5010 (ALKELMMYAA…HQKMLKSMAA (215 aa)) is rdRp Fingers N-ter. The segment at 5011-5049 (TRGATCVIGTTKFYGGWDFMLKTLYKDVESPHLMGWDYP) is rdRp Palm N-ter. In terms of domain architecture, RdRp catalytic spans 5041–5203 (PHLMGWDYPK…CYNSDYAAKG (163 aa)). Positions 5050 to 5108 (KCDRAMPNMCRILASLILARKHSTCCTNSDRFYRLANECAQVLSEYVLCGGGYYVKPGG) are rdRp Fingers C-ter. Positions 5071, 5074, and 5075 each coordinate Zn(2+). The segment at 5109 to 5244 (TSSGDATTAY…EKGPHEFCSQ (136 aa)) is rdRp Palm C-ter. Active-site residues include Ser5188, Asp5189, and Asp5190. The interval 5245–5361 (HTLYIKDGDD…DLYSSPTTLQ (117 aa)) is rdRp Thumb. The region spanning 5362 to 5474 (AVGSCVVCHS…MEFNRLATCD (113 aa)) is the CV ZBD domain. Cys5366, Cys5369, Cys5377, Cys5380, Cys5387, Cys5390, His5394, His5400, Cys5411, Cys5416, Cys5433, and His5436 together coordinate Zn(2+). Positions 5618 to 5799 (TVPEEFANHV…MCNLGPDIFL (182 aa)) constitute a (+)RNA virus helicase ATP-binding domain. 5643–5650 (GPPGTGKS) is a binding site for ATP. In terms of domain architecture, (+)RNA virus helicase C-terminal spans 5800–5974 (SVCYRCPKEI…GLFKDCSRED (175 aa)). The region spanning 6031-6246 (LFITRDEAIR…RCLAIYDCFI (216 aa)) is the ExoN domain. Residues Asp6049, Glu6051, and Glu6150 contribute to the active site. Residues Cys6166, Cys6169, Cys6185, His6188, His6216, Cys6220, and His6223 each contribute to the Zn(2+) site. Residues His6227 and Asp6232 contribute to the active site. Zn(2+) is bound at residue Cys6238. In terms of domain architecture, N7-MTase spans 6255-6482 (YPYISHEQKL…NLWSTFVKVQ (228 aa)). 6290-6296 (DIGNPKG) contributes to the S-adenosyl-L-methionine binding site. Residues 6368 to 6382 (CNGGSLYVNKHAFHT) are gpppA-binding. The Zn(2+) site is built by Cys6406, Cys6428, Cys6439, and His6442. The 61-residue stretch at 6483-6543 (GLENIAFNVI…NVAFELYAKR (61 aa)) folds into the Nsp15 N-terminal oligomerization domain. The 122-residue stretch at 6544–6665 (AVRSHPDLNL…LYKKVNNEFV (122 aa)) folds into the AV-Nsp11N/CoV-Nsp15M domain. One can recognise a NendoU domain in the interval 6682 to 6821 (TALTPMEEDF…KDGKVQTFYP (140 aa)). Active-site residues include His6712, His6727, Lys6767, Lys6870, Asp6954, Lys6994, and Glu7027. The Nidovirus-type SAM-dependent 2'-O-MTase domain maps to 6826-7120 (TNDWKPGLTM…TLNVSTDVLV (295 aa)).

This sequence belongs to the coronaviruses polyprotein 1ab family. As to quaternary structure, interacts with host PHB and PHB2. In terms of assembly, interacts with papain-like protease nsp3 and non-structural protein 6. Monomer. Homodimer. Only the homodimer shows catalytic activity. As to quaternary structure, interacts with nsp8 and nsp12 to form the replication-transcription complex (RTC): nsp12, nsp7, two subunits of nsp8, and up to two subunits of nsp13. In terms of assembly, interacts with nsp7, nsp13 and nsp12 to form the replication-transcription complex (RTC): nsp12, nsp7, two subunits of nsp8, and up to two subunits of nsp13. Interacts with nsp12. As to quaternary structure, interacts with proofreading exoribonuclease nsp14 and 2'-O-methyltransferase nsp16; these interactions enhance nsp14 and nsp16 enzymatic activities. In terms of assembly, interacts with nsp7 and nsp8 to form the replication-transcription complex (RTC): nsp12, nsp7, two subunits of nsp8, and up to two subunits of nsp13. Interacts with nsp9. Interacts with nsp8 to form the replication-transcription complex (RTC): nsp12, nsp7, two subunits of nsp8, and up to two subunits of nsp13. Requires Mn(2+) as cofactor. Mg(2+) serves as cofactor. Specific enzymatic cleavages in vivo by its own proteases yield mature proteins. 3CL-PRO and PL-PRO proteinases are autocatalytically processed.

The protein resides in the host membrane. It is found in the host cytoplasm. The protein localises to the host perinuclear region. It localises to the host endoplasmic reticulum-Golgi intermediate compartment. It catalyses the reaction ATP + H2O = ADP + phosphate + H(+). The enzyme catalyses RNA(n) + a ribonucleoside 5'-triphosphate = RNA(n+1) + diphosphate. The catalysed reaction is Thiol-dependent hydrolysis of ester, thioester, amide, peptide and isopeptide bonds formed by the C-terminal Gly of ubiquitin (a 76-residue protein attached to proteins as an intracellular targeting signal).. It carries out the reaction a 5'-end (N(7)-methyl 5'-triphosphoguanosine)-ribonucleoside in mRNA + S-adenosyl-L-methionine = a 5'-end (N(7)-methyl 5'-triphosphoguanosine)-(2'-O-methyl-ribonucleoside) in mRNA + S-adenosyl-L-homocysteine + H(+). It catalyses the reaction uridylyl-uridylyl-ribonucleotide-RNA = a 3'-end uridylyl-2',3'-cyclophospho-uridine-RNA + a 5'-end dephospho-ribonucleoside-RNA. The enzyme catalyses a 5'-end diphospho-ribonucleoside in mRNA + GTP + H(+) = a 5'-end (5'-triphosphoguanosine)-ribonucleoside in mRNA + diphosphate. The catalysed reaction is a 5'-end (5'-triphosphoguanosine)-ribonucleoside in mRNA + S-adenosyl-L-methionine = a 5'-end (N(7)-methyl 5'-triphosphoguanosine)-ribonucleoside in mRNA + S-adenosyl-L-homocysteine. Its function is as follows. The replicase polyprotein of coronaviruses is a multifunctional protein: it contains the activities necessary for the transcription of negative stranded RNA, leader RNA, subgenomic mRNAs and progeny virion RNA as well as proteinases responsible for the cleavage of the polyprotein into functional products. In terms of biological role, inhibits host translation by interacting with the 40S ribosomal subunit. The nsp1-40S ribosome complex further induces an endonucleolytic cleavage near the 5'UTR of host mRNAs, targeting them for degradation. Viral mRNAs are not susceptible to nsp1-mediated endonucleolytic RNA cleavage thanks to the presence of a 5'-end leader sequence and are therefore protected from degradation. By suppressing host gene expression, nsp1 facilitates efficient viral gene expression in infected cells and evasion from host immune response. May play a role in the modulation of host cell survival signaling pathway by interacting with host PHB and PHB2. Indeed, these two proteins play a role in maintaining the functional integrity of the mitochondria and protecting cells from various stresses. Functionally, responsible for the cleavages located at the N-terminus of the replicase polyprotein. In addition, PL-PRO possesses a deubiquitinating/deISGylating activity and processes both 'Lys-48'- and 'Lys-63'-linked polyubiquitin chains from cellular substrates. Participates together with nsp4 in the assembly of virally-induced cytoplasmic double-membrane vesicles necessary for viral replication. Antagonizes innate immune induction of type I interferon by blocking the phosphorylation, dimerization and subsequent nuclear translocation of host IRF3. Also prevents host NF-kappa-B signaling. Its function is as follows. Participates in the assembly of virally-induced cytoplasmic double-membrane vesicles necessary for viral replication. In terms of biological role, cleaves the C-terminus of replicase polyprotein at 11 sites. Recognizes substrates containing the core sequence [ILMVF]-Q-|-[SGACN]. Also able to bind an ADP-ribose-1''-phosphate (ADRP). Plays a role in the initial induction of autophagosomes from host endoplasmic reticulum. Later, limits the expansion of these phagosomes that are no longer able to deliver viral components to lysosomes. Functionally, forms a hexadecamer with nsp8 (8 subunits of each) that may participate in viral replication by acting as a primase. Alternatively, may synthesize substantially longer products than oligonucleotide primers. Its function is as follows. Forms a hexadecamer with nsp7 (8 subunits of each) that may participate in viral replication by acting as a primase. Alternatively, may synthesize substantially longer products than oligonucleotide primers. In terms of biological role, forms a primer, NSP9-pU, which is utilized by the polymerase for the initiation of RNA chains. Interacts with ribosome signal recognition particle RNA (SRP). Together with NSP8, suppress protein integration into the cell membrane, thereby disrupting host immune defenses. Plays a pivotal role in viral transcription by stimulating both nsp14 3'-5' exoribonuclease and nsp16 2'-O-methyltransferase activities. Therefore plays an essential role in viral mRNAs cap methylation. Functionally, RNA-directed RNA polymerase that catalyzes the transcription of viral genomic and subgenomic RNAs. Acts in complex with nsp7 and nsp8 to transcribe both the minus and positive strands of genomic RNA. The kinase-like NiRAN domain of NSP12 attaches one or more nucleotides to the amino terminus of NSP9, forming a covalent RNA-protein intermediate that serves as transcription/replication primer. Subgenomic RNAs (sgRNAs) are formed by discontinuous transcription: The polymerase has the ability to pause at transcription-regulating sequences (TRS) and jump to the leader TRS, resulting in a major deletion. This creates a series of subgenomic RNAs that are replicated, transcribed and translated. In addition, Nsp12 is a subunit of the viral RNA capping enzyme that catalyzes the RNA guanylyltransferase reaction for genomic and sub-genomic RNAs. Subsequently, the NiRAN domain transfers RNA to GDP, and forms the core cap structure GpppA-RNA. Its function is as follows. Multi-functional protein with a zinc-binding domain in N-terminus displaying RNA and DNA duplex-unwinding activities with 5' to 3' polarity. Activity of helicase is dependent on magnesium. In terms of biological role, plays a role in viral RNA synthesis through two distinct activities. The N7-guanine methyltransferase activity plays a role in the formation of the cap structure GpppA-RNA. The proofreading exoribonuclease reduces the sensitivity of the virus to RNA mutagens during replication. This activity acts on both ssRNA and dsRNA in a 3'-5' direction. Plays a role in viral transcription/replication and prevents the simultaneous activation of host cell dsRNA sensors, such as MDA5/IFIH1, OAS, and PKR. Acts by degrading the 5'-polyuridines generated during replication of the poly(A) region of viral genomic and subgenomic RNAs. Catalyzes a two-step reaction in which a 2'3'-cyclic phosphate (2'3'-cP) is first generated by 2'-O transesterification, which is then hydrolyzed to a 3'-phosphate (3'-P). If not degraded, poly(U) RNA would hybridize with poly(A) RNA tails and activate host dsRNA sensors. Functionally, methyltransferase that mediates mRNA cap 2'-O-ribose methylation to the 5'-cap structure of viral mRNAs. N7-methyl guanosine cap is a prerequisite for binding of nsp16. Therefore plays an essential role in viral mRNAs cap methylation which is essential to evade immune system. The sequence is that of Replicase polyprotein 1ab (rep) from Bat coronavirus 133/2005 (BtCoV).